A 276-amino-acid polypeptide reads, in one-letter code: Secretagogin (276 aa).

EF-hand domains lie at leucine 12 to lysine 47, asparagine 58 to asparagine 93, aspartate 105 to histidine 140, lysine 149 to phenylalanine 184, glutamate 197 to leucine 232, and valine 240 to proline 276. 27 residues coordinate Ca(2+): aspartate 25, aspartate 27, tyrosine 31, glutamate 36, aspartate 71, serine 73, aspartate 75, arginine 77, glutamate 82, aspartate 118, aspartate 120, serine 122, glutamate 129, aspartate 162, asparagine 164, aspartate 166, arginine 168, aspartate 173, aspartate 210, serine 212, threonine 214, glutamate 221, aspartate 254, asparagine 256, aspartate 258, lysine 260, and glutamate 265.

In terms of tissue distribution, expressed at high levels in the pancreatic islets of Langerhans and to a much lesser extent in the gastrointestinal tract (stomach, small intestine and colon), the adrenal medulla and cortex and the thyroid C-cells. In the brain, the expression is restricted to distinct subtypes of neurons with highest expression in the molecular layer of the cerebellum (stellate and basket cells), in the anterior part of the pituitary gland, in the thalamus, in the hypothalamus and in a subgroup of neocortical neurons.

The protein resides in the cytoplasm. Its subcellular location is the secreted. It localises to the cytoplasmic vesicle. The protein localises to the secretory vesicle membrane. The sequence is that of Secretagogin (SCGN) from Homo sapiens (Human).